A 375-amino-acid chain; its full sequence is G-protein coupled estrogen receptor 1 (375 aa).

M1 carries the post-translational modification N-acetylmethionine. At 1-62 (MDATTPAQTV…QQYVIALFLS (62 aa)) the chain is on the extracellular side. Residues N32 and N44 are each glycosylated (N-linked (GlcNAc...) asparagine). Residues 63–84 (CLYTIFLFPIGFVGNILILVVN) form a helical membrane-spanning segment. The Cytoplasmic portion of the chain corresponds to 85-96 (ISFREKMTIPDL). A helical membrane pass occupies residues 97–120 (YFINLAAADLILVADSLIEVFNLD). Topologically, residues 121–132 (EQYYDIAVLCTF) are extracellular. C130 and C207 are oxidised to a cystine. Residues 133–153 (MSLFLQINMYSSVFFLTWMSF) traverse the membrane as a helical segment. At 154–175 (DRYLALAKAMRCGLFRTKHHAR) the chain is on the cytoplasmic side. The helical transmembrane segment at 176 to 194 (LSCGLIWMASVSATLVPFT) threads the bilayer. The Extracellular portion of the chain corresponds to 195–220 (AVHLRHTEEACFCFADVREVQWLEVT). The helical transmembrane segment at 221–236 (LGFIMPFAIIGLCYSL) threads the bilayer. The Cytoplasmic portion of the chain corresponds to 237-259 (IVRALIRAHRHRGLRPRRQKALR). The chain crosses the membrane as a helical span at residues 260–280 (MIFAVVLVFFICWLPENVFIS). Topologically, residues 281-306 (VHLLQWTQPGDTPCKQSFRHAYPLTG) are extracellular. The helical transmembrane segment at 307–327 (HIVNLAAFSNSCLNPLIYSFL) threads the bilayer. Topologically, residues 328–375 (GETFRDKLRLYVEQKTSLPALNRFCHATLKAVIPDSTEQSEVRFSSAV) are cytoplasmic.

The protein belongs to the G-protein coupled receptor 1 family. As to quaternary structure, interacts with RAMP3; the interaction confers proper subcellular localization and function in cardioprotection. Interacts with KRT7 and KRT8. Interacts with EGFR; the interaction increases after agonist-induced stimulation in cancer-associated fibroblasts (CAF). Interacts with EGFR and ESR1. Interacts (via C-terminus tail motif) with DLG4 (via N-terminus tandem pair of PDZ domains); the interaction is direct and induces the increase of GPER1 protein levels residing at the plasma membrane surface in a estradiol-independent manner. Homodimer. Heterodimer; heterodimerizes with other G-protein-coupled receptor (GPCRs) like CRHR1, HTR1A and PAQR8. In terms of processing, ubiquitinated; ubiquitination occurs at the plasma membrane and leads to proteasome-mediated degradation. Post-translationally, N-glycosylated. As to expression, expressed in brain, heart, spleen, preadipocytes, mature adipocytes and primary hippocampal neurons. Expressed in neurons of the hippocampus, hypothalamic paraventricular nucleus (PVH), supraoptic nucleus (SON) and the median eminence. Expressed in the nucleus ambiguous (at protein level). Expressed in brain, pituitary gland, adrenal medulla, renal pelvis, ovary, endothelial cells, visceral fat tissues and islets of Langerhans.

It localises to the nucleus. The protein localises to the cytoplasm. The protein resides in the perinuclear region. It is found in the cytoskeleton. Its subcellular location is the cell membrane. It localises to the endoplasmic reticulum membrane. The protein localises to the golgi apparatus membrane. The protein resides in the cell projection. It is found in the dendrite. Its subcellular location is the cytoplasmic vesicle membrane. It localises to the early endosome. The protein localises to the recycling endosome. The protein resides in the golgi apparatus. It is found in the trans-Golgi network. Its subcellular location is the dendritic spine membrane. It localises to the axon. The protein localises to the postsynaptic density. The protein resides in the mitochondrion membrane. Functionally, G-protein coupled estrogen receptor that binds to 17-beta-estradiol (E2) with high affinity, leading to rapid and transient activation of numerous intracellular signaling pathways. Stimulates cAMP production, calcium mobilization and tyrosine kinase Src inducing the release of heparin-bound epidermal growth factor (HB-EGF) and subsequent transactivation of the epidermal growth factor receptor (EGFR), activating downstream signaling pathways such as PI3K/Akt and ERK/MAPK. Mediates pleiotropic functions among others in the cardiovascular, endocrine, reproductive, immune and central nervous systems. Has a role in cardioprotection by reducing cardiac hypertrophy and perivascular fibrosis in a RAMP3-dependent manner. Regulates arterial blood pressure by stimulating vasodilation and reducing vascular smooth muscle and microvascular endothelial cell proliferation. Plays a role in blood glucose homeostasis contributing to the insulin secretion response by pancreatic beta cells. Triggers mitochondrial apoptosis during pachytene spermatocyte differentiation. Stimulates uterine epithelial cell proliferation. Enhances uterine contractility in response to oxytocin. Contributes to thymic atrophy by inducing apoptosis. Attenuates TNF-mediated endothelial expression of leukocyte adhesion molecules. Promotes neuritogenesis in developing hippocampal neurons. Plays a role in acute neuroprotection against NMDA-induced excitotoxic neuronal death. Increases firing activity and intracellular calcium oscillations in luteinizing hormone-releasing hormone (LHRH) neurons. Inhibits early osteoblast proliferation at growth plate during skeletal development. Inhibits mature adipocyte differentiation and lipid accumulation. Involved in the recruitment of beta-arrestin 2 ARRB2 at the plasma membrane in epithelial cells. Also functions as a receptor for aldosterone mediating rapid regulation of vascular contractibility through the PI3K/ERK signaling pathway. Involved in cancer progression regulation. Stimulates cancer-associated fibroblast (CAF) proliferation by a rapid genomic response through the EGFR/ERK transduction pathway. Associated with EGFR, may act as a transcription factor activating growth regulatory genes (c-fos, cyclin D1). Promotes integrin alpha-5/beta-1 and fibronectin (FN) matrix assembly in breast cancer cells. The sequence is that of G-protein coupled estrogen receptor 1 (Gper1) from Mus musculus (Mouse).